A 689-amino-acid chain; its full sequence is Elongation factor G (689 aa).

The tr-type G domain maps to 9–283; sequence AKFRNIGIMA…AIVEFMPSPL (275 aa). GTP is bound by residues 18–25, 82–86, and 136–139; these read AHIDAGKT, DTPGH, and NKMD.

The protein belongs to the TRAFAC class translation factor GTPase superfamily. Classic translation factor GTPase family. EF-G/EF-2 subfamily.

It localises to the cytoplasm. Catalyzes the GTP-dependent ribosomal translocation step during translation elongation. During this step, the ribosome changes from the pre-translocational (PRE) to the post-translocational (POST) state as the newly formed A-site-bound peptidyl-tRNA and P-site-bound deacylated tRNA move to the P and E sites, respectively. Catalyzes the coordinated movement of the two tRNA molecules, the mRNA and conformational changes in the ribosome. This is Elongation factor G from Clostridium botulinum (strain Kyoto / Type A2).